The following is a 340-amino-acid chain: DNA-directed RNA polymerase subunit alpha (340 aa).

Residues 1–226 (MLIAQRPSLT…ELFGLARELN (226 aa)) form an alpha N-terminal domain (alpha-NTD) region. Positions 243-340 (LAADLALPIE…DAGFVETEQY (98 aa)) are alpha C-terminal domain (alpha-CTD).

The protein belongs to the RNA polymerase alpha chain family. As to quaternary structure, homodimer. The RNAP catalytic core consists of 2 alpha, 1 beta, 1 beta' and 1 omega subunit. When a sigma factor is associated with the core the holoenzyme is formed, which can initiate transcription. In terms of processing, the last 19 amino acids in the C-terminal part are cleaved in the spore.

It carries out the reaction RNA(n) + a ribonucleoside 5'-triphosphate = RNA(n+1) + diphosphate. DNA-dependent RNA polymerase catalyzes the transcription of DNA into RNA using the four ribonucleoside triphosphates as substrates. The protein is DNA-directed RNA polymerase subunit alpha of Streptomyces granaticolor.